We begin with the raw amino-acid sequence, 295 residues long: UDP-N-acetylenolpyruvoylglucosamine reductase (295 aa).

Positions 26–189 constitute an FAD-binding PCMH-type domain; that stretch reads VGGRADILFK…VEAEFKGVNS (164 aa). R169 is an active-site residue. The active-site Proton donor is C218. E288 is an active-site residue.

The protein belongs to the MurB family. It depends on FAD as a cofactor.

It localises to the cytoplasm. It carries out the reaction UDP-N-acetyl-alpha-D-muramate + NADP(+) = UDP-N-acetyl-3-O-(1-carboxyvinyl)-alpha-D-glucosamine + NADPH + H(+). It participates in cell wall biogenesis; peptidoglycan biosynthesis. Functionally, cell wall formation. This is UDP-N-acetylenolpyruvoylglucosamine reductase from Wolbachia sp. subsp. Drosophila simulans (strain wRi).